Reading from the N-terminus, the 208-residue chain is Photosystem I reaction center subunit II-1, chloroplastic (208 aa).

The transit peptide at 1-45 (MATQAAGIFNSAITTAATSGVKKLHFFSTTHRPKSLSFTKTAIRA) directs the protein to the chloroplast. At Thr48 the chain carries Phosphothreonine. The interval 49 to 72 (DSSAAAAAAPATKEAPVGFTPPQL) is disordered. Residues 50–64 (SSAAAAAAPATKEAP) show a composition bias toward low complexity. Positions 141 to 149 (RLRSKYKIT) are ferredoxin and ferredoxin-oxidoreductase binding.

It belongs to the PsaD family. In terms of assembly, interacts with PGRL1A and PGRL1B. Phosphorylated by a threonine specific thylakoid kinase in a light activated and redox-dependent manner.

The protein localises to the plastid. It is found in the chloroplast thylakoid membrane. Its function is as follows. PsaD can form complexes with ferredoxin and ferredoxin-oxidoreductase in photosystem I (PS I) reaction center. PSAD may encode the ferredoxin-docking protein. This is Photosystem I reaction center subunit II-1, chloroplastic (psaD1) from Arabidopsis thaliana (Mouse-ear cress).